Reading from the N-terminus, the 403-residue chain is uncharacterized protein (403 aa).

The next 6 helical transmembrane spans lie at 31-51 (FLIATIIGPLIIIALAIIGSF), 186-206 (LPIGFVFLLYMAISSLSGIIV), 238-258 (ISAVGLLQIGIWVLFALPIII), 268-288 (LAIFALIYFVLGYLFYSSLLC), 303-323 (LISPIIIIQIIPIMFMNTIMV), and 355-375 (LIEIVLSTAIMIVSIVISFIL).

It to B.subtilis YhaP.

It is found in the cell membrane. This is an uncharacterized protein from Methanocaldococcus jannaschii (strain ATCC 43067 / DSM 2661 / JAL-1 / JCM 10045 / NBRC 100440) (Methanococcus jannaschii).